Here is a 965-residue protein sequence, read N- to C-terminus: Glycine dehydrogenase (decarboxylating) 1 (965 aa).

The residue at position 713 (K713) is an N6-(pyridoxal phosphate)lysine.

It belongs to the GcvP family. In terms of assembly, the glycine cleavage system is composed of four proteins: P, T, L and H. It depends on pyridoxal 5'-phosphate as a cofactor.

It carries out the reaction N(6)-[(R)-lipoyl]-L-lysyl-[glycine-cleavage complex H protein] + glycine + H(+) = N(6)-[(R)-S(8)-aminomethyldihydrolipoyl]-L-lysyl-[glycine-cleavage complex H protein] + CO2. Its function is as follows. The glycine cleavage system catalyzes the degradation of glycine. The P protein binds the alpha-amino group of glycine through its pyridoxal phosphate cofactor; CO(2) is released and the remaining methylamine moiety is then transferred to the lipoamide cofactor of the H protein. The sequence is that of Glycine dehydrogenase (decarboxylating) 1 from Colwellia psychrerythraea (strain 34H / ATCC BAA-681) (Vibrio psychroerythus).